The sequence spans 428 residues: Histidinol dehydrogenase (428 aa).

Positions 127, 189, and 212 each coordinate NAD(+). Substrate contacts are provided by Ser-235, Gln-257, and His-260. Residues Gln-257 and His-260 each coordinate Zn(2+). Residues Glu-325 and His-326 each act as proton acceptor in the active site. The substrate site is built by His-326, Asp-359, Glu-413, and His-418. Zn(2+) is bound at residue Asp-359. Position 418 (His-418) interacts with Zn(2+).

It belongs to the histidinol dehydrogenase family. Zn(2+) serves as cofactor.

It carries out the reaction L-histidinol + 2 NAD(+) + H2O = L-histidine + 2 NADH + 3 H(+). The protein operates within amino-acid biosynthesis; L-histidine biosynthesis; L-histidine from 5-phospho-alpha-D-ribose 1-diphosphate: step 9/9. Its function is as follows. Catalyzes the sequential NAD-dependent oxidations of L-histidinol to L-histidinaldehyde and then to L-histidine. In Prochlorococcus marinus subsp. pastoris (strain CCMP1986 / NIES-2087 / MED4), this protein is Histidinol dehydrogenase.